The following is a 213-amino-acid chain: ATP phosphoribosyltransferase (213 aa).

The protein belongs to the ATP phosphoribosyltransferase family. Short subfamily. In terms of assembly, heteromultimer composed of HisG and HisZ subunits.

The protein localises to the cytoplasm. It carries out the reaction 1-(5-phospho-beta-D-ribosyl)-ATP + diphosphate = 5-phospho-alpha-D-ribose 1-diphosphate + ATP. The protein operates within amino-acid biosynthesis; L-histidine biosynthesis; L-histidine from 5-phospho-alpha-D-ribose 1-diphosphate: step 1/9. In terms of biological role, catalyzes the condensation of ATP and 5-phosphoribose 1-diphosphate to form N'-(5'-phosphoribosyl)-ATP (PR-ATP). Has a crucial role in the pathway because the rate of histidine biosynthesis seems to be controlled primarily by regulation of HisG enzymatic activity. In Bacillus licheniformis (strain ATCC 14580 / DSM 13 / JCM 2505 / CCUG 7422 / NBRC 12200 / NCIMB 9375 / NCTC 10341 / NRRL NRS-1264 / Gibson 46), this protein is ATP phosphoribosyltransferase.